We begin with the raw amino-acid sequence, 131 residues long: Protein GLUTAMINE DUMPER 5 (131 aa).

Residues 1 to 34 (MRQFPSIRGNINEKMMTTMVESQTRSPWRTPVPY) lie on the Extracellular side of the membrane. Residues 35-55 (LFGGLAAMLGLIAFALLLLAC) form a helical membrane-spanning segment. The Cytoplasmic segment spans residues 56–131 (SYWRLSRQTE…GESKVTEENH (76 aa)). The VIMAG motif lies at 88–92 (VIMAG).

Belongs to the GLUTAMINE DUMPER 1 (TC 9.B.60) family. Expressed in the vascular tissues. Also detected in guard cells.

The protein localises to the membrane. Probable subunit of an amino acid transporter involved in the regulation of the amino acid metabolism. Stimulates amino acid export by activating nonselective amino acid facilitators. The protein is Protein GLUTAMINE DUMPER 5 (GDU5) of Arabidopsis thaliana (Mouse-ear cress).